Here is a 340-residue protein sequence, read N- to C-terminus: Glutaminase 2 (340 aa).

Residues serine 89, asparagine 140, asparagine 191, tyrosine 215, and tyrosine 267 each contribute to the substrate site.

This sequence belongs to the glutaminase family. In terms of assembly, homotetramer.

The enzyme catalyses L-glutamine + H2O = L-glutamate + NH4(+). The polypeptide is Glutaminase 2 (Yersinia pestis).